Here is a 270-residue protein sequence, read N- to C-terminus: Putative hydro-lyase Reut_A2449 (270 aa).

It belongs to the D-glutamate cyclase family.

This Cupriavidus pinatubonensis (strain JMP 134 / LMG 1197) (Cupriavidus necator (strain JMP 134)) protein is Putative hydro-lyase Reut_A2449.